The primary structure comprises 556 residues: Polypeptide N-acetylgalactosaminyltransferase 13 (556 aa).

Residues 1-4 (MRRF) are Cytoplasmic-facing. The helical; Signal-anchor for type II membrane protein transmembrane segment at 5–27 (VYCKVVLATSLMWVLVDVFLLLY) threads the bilayer. Over 28–556 (FSECNKCDDK…WLLRNMTLGT (529 aa)) the chain is Lumenal. N-linked (GlcNAc...) asparagine glycosylation is found at Asn-94 and Asn-116. Intrachain disulfides connect Cys-105–Cys-338, Cys-329–Cys-407, Cys-441–Cys-458, Cys-481–Cys-496, and Cys-522–Cys-539. The tract at residues 114 to 224 (LPNTSVVIVF…LGWLEPLLAR (111 aa)) is catalytic subdomain A. Substrate-binding residues include Asp-155 and Arg-185. Mn(2+) contacts are provided by Asp-208 and His-210. Residues 284–346 (PVRTPTMAGG…TCSHVGHVFR (63 aa)) are catalytic subdomain B. Trp-315 serves as a coordination point for substrate. His-343 is a Mn(2+) binding site. 2 residues coordinate substrate: Arg-346 and Tyr-351. Positions 428-550 (YSLGEIRNVE…GSRSQQWLLR (123 aa)) constitute a Ricin B-type lectin domain. A glycan (N-linked (GlcNAc...) asparagine) is linked at Asn-551.

The protein belongs to the glycosyltransferase 2 family. GalNAc-T subfamily. Mn(2+) serves as cofactor. Specifically expressed in neuronal cells. Expressed in fetal brain, whole adult brain, cerebral cortex and cerebellum. Not expressed in other tissues tested.

It localises to the golgi apparatus membrane. The catalysed reaction is L-seryl-[protein] + UDP-N-acetyl-alpha-D-galactosamine = a 3-O-[N-acetyl-alpha-D-galactosaminyl]-L-seryl-[protein] + UDP + H(+). The enzyme catalyses L-threonyl-[protein] + UDP-N-acetyl-alpha-D-galactosamine = a 3-O-[N-acetyl-alpha-D-galactosaminyl]-L-threonyl-[protein] + UDP + H(+). Its pathway is protein modification; protein glycosylation. In terms of biological role, catalyzes the initial reaction in O-linked oligosaccharide biosynthesis, the transfer of an N-acetyl-D-galactosamine (GalNAc) residue from UDP-GalNAc to a serine or threonine residue on the protein receptor. Generates GalNAc-O-Ser/Thr structure also known as Tn antigen, which itself is immunogenic but also serves as a precursor for the synthesis of different mucin-type O-glycan core structures. Contributes to the synthesis of O-linked glycans on mucins and proteoglycans of the central nervous system. May promote neurogenesis through glycosylation and stabilization of PDPN. Its function is as follows. Can glycosylate both unmodified peptides and glycopeptides that already contain an O-linked GalNAc sugar. Transfers GalNAc to Thr-/Ser-rich tandem repeats GTTPSPVPTTSTTSAP of MUC5AC, specifically on Thr-3 of non-glycosylated MUC5AC peptide, on Thr-12 and Thr-13 of preglycosylated MUC5AC at Thr-3 (MUC5AC-3), on Thr-3 of preglycosylated MUC5AC at Thr-13 (MUC5AC-13) and on Thr-12 of preglycosylated MUC5AC at Thr-3 and Thr-13 (MUC5AC-3,13). Transfers GalNAc to three consecutive serine/threonine residues on SDC3 forming a triplet-Tn epitope expressed in Purkinje cells of the developing brain. Can glycosylate both unmodified peptides and glycopeptides that already contain an O-linked GalNAc sugar. Transfers GalNAc to Thr-/Ser-rich tandem repeats GTTPSPVPTTSTTSAP of MUC5AC, specifically on Thr-3 of non-glycosylated MUC5AC peptide, on Thr-12 and Thr-13 of preglycosylated MUC5AC at Thr-3 (MUC5AC-3), on Thr-3 of preglycosylated MUC5AC at Thr-13 (MUC5AC-13) and on Thr-12 of preglycosylated MUC5AC at Thr-3 and Thr-13 (MUC5AC-3,13). This Homo sapiens (Human) protein is Polypeptide N-acetylgalactosaminyltransferase 13 (GALNT13).